The chain runs to 283 residues: ATP phosphoribosyltransferase (283 aa).

It belongs to the ATP phosphoribosyltransferase family. Long subfamily. Mg(2+) is required as a cofactor.

It localises to the cytoplasm. It catalyses the reaction 1-(5-phospho-beta-D-ribosyl)-ATP + diphosphate = 5-phospho-alpha-D-ribose 1-diphosphate + ATP. Its pathway is amino-acid biosynthesis; L-histidine biosynthesis; L-histidine from 5-phospho-alpha-D-ribose 1-diphosphate: step 1/9. Feedback inhibited by histidine. Catalyzes the condensation of ATP and 5-phosphoribose 1-diphosphate to form N'-(5'-phosphoribosyl)-ATP (PR-ATP). Has a crucial role in the pathway because the rate of histidine biosynthesis seems to be controlled primarily by regulation of HisG enzymatic activity. The protein is ATP phosphoribosyltransferase of Salinibacter ruber (strain DSM 13855 / M31).